Consider the following 582-residue polypeptide: Vesicular glutamate transporter 2 (582 aa).

The Cytoplasmic segment spans residues 1–71 (MESVKQRILA…CTCFGLPRRY (71 aa)). Residues 72 to 92 (IIAIMSGLGFCISFGIRCNLG) form a helical membrane-spanning segment. The Vesicular segment spans residues 93 to 125 (VAIVDMVNNSTIHRGGKVIKEKAKFNWDPETVG). N-linked (GlcNAc...) asparagine glycans are attached at residues Asn-100 and Asn-101. A helical membrane pass occupies residues 126–146 (MIHGSFFWGYIITQIPGGYIA). Residues 147–148 (SR) lie on the Cytoplasmic side of the membrane. A helical membrane pass occupies residues 149 to 169 (LAANRVFGAAILLTSTLNMLI). At 170–177 (PSAARVHY) the chain is on the vesicular side. A helical transmembrane segment spans residues 178–198 (GCVIFVRILQGLVEGVTYPAC). The Cytoplasmic portion of the chain corresponds to 199 to 216 (HGIWSKWAPPLERSRLAT). The chain crosses the membrane as a helical span at residues 217–237 (TSFCGSYAGAVIAMPLAGILV). Over 238 to 244 (QYTGWSS) the chain is Vesicular. A helical transmembrane segment spans residues 245-265 (VFYVYGSFGMVWYMFWLLVSY). The Cytoplasmic portion of the chain corresponds to 266-310 (ESPAKHPTITDEERRYIEESIGESANLLGAMEKFKTPWRKFFTSM). Residues 311–331 (PVYAIIVANFCRSWTFYLLLI) form a helical membrane-spanning segment. Over 332 to 349 (SQPAYFEEVFGFEISKVG) the chain is Vesicular. Residues 350–370 (MLSAVPHLVMTIIVPIGGQIA) form a helical membrane-spanning segment. Topologically, residues 371–386 (DFLRSKQILSTTTVRK) are cytoplasmic. The chain crosses the membrane as a helical span at residues 387–407 (IMNCGGFGMEATLLLVVGYSH). Residues 408–409 (TR) are Vesicular-facing. Residues 410 to 430 (GVAISFLVLAVGFSGFAISGF) form a helical membrane-spanning segment. At 431 to 443 (NVNHLDIAPRYAS) the chain is on the cytoplasmic side. Residues 444–464 (ILMGISNGVGTLSGMVCPIIV) form a helical membrane-spanning segment. Topologically, residues 465–477 (GAMTKNKSREEWQ) are vesicular. N-linked (GlcNAc...) asparagine glycosylation occurs at Asn-470. The chain crosses the membrane as a helical span at residues 478–498 (YVFLIAALVHYGGVIFYAIFA). At 499-582 (SGEKQPWADP…HSYKDRVDYS (84 aa)) the chain is on the cytoplasmic side.

This sequence belongs to the major facilitator superfamily. Sodium/anion cotransporter family. VGLUT subfamily. In terms of tissue distribution, predominantly expressed in adult brain. Expressed in amygdala, caudate nucleus, cerebral cortex, frontal lobe, hippocampus, medulla, occipital lobe, putamen, spinal cord, substantia nigra, subthalamic nucleus, temporal lobe and thalamus.

It is found in the cytoplasmic vesicle. It localises to the secretory vesicle. The protein localises to the synaptic vesicle membrane. The protein resides in the synapse. Its subcellular location is the synaptosome. It is found in the cell membrane. It carries out the reaction L-glutamate(out) = L-glutamate(in). The catalysed reaction is 3 Na(+)(out) + phosphate(out) = 3 Na(+)(in) + phosphate(in). It catalyses the reaction phosphate(in) = phosphate(out). The enzyme catalyses K(+)(in) + H(+)(out) = K(+)(out) + H(+)(in). It carries out the reaction chloride(in) = chloride(out). With respect to regulation, chloride channel activity is allosterically activated by lumenal H(+) and Cl(-) leading to synaptic vesicles acidification. The L-glutamate transport activity is allosterically activated by lumenal H(+) and Cl(-). The allosteric requirement for H(+) efficiently prevents non-vesicular efflux across the plasma membrane. The L-glutamate uniporter activity exhibits a biphasic dependence on chloride concentration. In terms of biological role, multifunctional transporter that transports L-glutamate as well as multiple ions such as chloride, proton, potassium, sodium and phosphate. At the synaptic vesicle membrane, mainly functions as a uniporter which transports preferentially L-glutamate but also, phosphate from the cytoplasm into synaptic vesicles at presynaptic nerve terminals of excitatory neural cells. The L-glutamate or phosphate uniporter activity is electrogenic and is driven by the proton electrochemical gradient, mainly by the electrical gradient established by the vacuolar H(+)-ATPase across the synaptic vesicle membrane. In addition, functions as a chloride channel that allows the chloride permeation through the synaptic vesicle membrane therefore affects the proton electrochemical gradient and promotes synaptic vesicles acidification. Moreover, functions as a vesicular K(+)/H(+) antiport allowing to maintain the electrical gradient and to decrease chemical gradient and therefore sustain vesicular glutamate uptake. The vesicular H(+)/H(+) antiport activity is electroneutral. At the plasma membrane, following exocytosis, functions as a symporter of Na(+) and phosphate from the extracellular space to the cytoplasm allowing synaptic phosphate homeostasis regulation. The symporter activity is driven by an inside negative membrane potential and is electrogenic. Also involved in the regulation of retinal hyaloid vessel regression during postnatal development. May also play a role in the endocrine glutamatergic system of other tissues such as pineal gland and pancreas. The chain is Vesicular glutamate transporter 2 from Homo sapiens (Human).